Reading from the N-terminus, the 96-residue chain is Co-chaperonin GroES (96 aa).

Belongs to the GroES chaperonin family. In terms of assembly, heptamer of 7 subunits arranged in a ring. Interacts with the chaperonin GroEL.

It localises to the cytoplasm. Its function is as follows. Together with the chaperonin GroEL, plays an essential role in assisting protein folding. The GroEL-GroES system forms a nano-cage that allows encapsulation of the non-native substrate proteins and provides a physical environment optimized to promote and accelerate protein folding. GroES binds to the apical surface of the GroEL ring, thereby capping the opening of the GroEL channel. The polypeptide is Co-chaperonin GroES (Pelagibacter ubique (strain HTCC1062)).